A 454-amino-acid polypeptide reads, in one-letter code: tRNA modification GTPase MnmE (454 aa).

The (6S)-5-formyl-5,6,7,8-tetrahydrofolate site is built by arginine 23, glutamate 80, and lysine 120. The TrmE-type G domain maps to 216 to 377 (GMKVVIAGRP…LREHLKQSMG (162 aa)). Asparagine 226 lines the K(+) pocket. Residues 226 to 231 (NAGKSS), 245 to 251 (TDIAGTT), and 270 to 273 (DTAG) contribute to the GTP site. Serine 230 serves as a coordination point for Mg(2+). K(+)-binding residues include threonine 245, isoleucine 247, and threonine 250. Threonine 251 provides a ligand contact to Mg(2+). A (6S)-5-formyl-5,6,7,8-tetrahydrofolate-binding site is contributed by lysine 454.

Belongs to the TRAFAC class TrmE-Era-EngA-EngB-Septin-like GTPase superfamily. TrmE GTPase family. Homodimer. Heterotetramer of two MnmE and two MnmG subunits. K(+) is required as a cofactor.

It localises to the cytoplasm. In terms of biological role, exhibits a very high intrinsic GTPase hydrolysis rate. Involved in the addition of a carboxymethylaminomethyl (cmnm) group at the wobble position (U34) of certain tRNAs, forming tRNA-cmnm(5)s(2)U34. The protein is tRNA modification GTPase MnmE of Mannheimia succiniciproducens (strain KCTC 0769BP / MBEL55E).